The chain runs to 702 residues: MEVTNLIEKCTKHSKDFATEVEKLWNDELSSESCLSRKTRNVIRNILRDITKSLTTDKKSKCFRILERSTINGEQIKDVYKTIFNNGVDAESRINTTGKYVLFTVMTYAAAELRLIKSDEIFALLSRFFNMICDIHKKYGCGNMFVGIPAALIVLLEIDHINKLFSVFSTRYDAKAYLYTEYFLFLNINHYLLSGSDLFINVAYGAVSFSSPISVPDYIMEALTFKACDHIMKSGDLIYIYAFTKKVKDLFNTKSDSIYQYVRLHEMSYDGVSEDTDDDDEVFAILNLSIDSSVDRYRNRVLLLTPEVASLRKEYSEAEPDYKYLMDEEVPAYDKHLPKPITNTGIEEPHATGGDKEDQPIKVVHPPNNDKDDAIKSYNPLEDPNYVPTITRTAIGIADYQLVINKLIEWLDKCEEECGNGGEFKTELEEAKRKLTELNAELSDKLSKIRTLERDSVYKTERIDRLTKEIKELRDIQNGTDDGSDSSEIDKKTIRELKESLDREREMRSELEKELDTIRDGKVDGSCQGRLELSRMWLKQRDDDLRAEIDKRRNVEWELSKLRRDIKECDKYKEELDKAKTTISNYVSRISTLESEIAKYQQDRDTLSAVRGELEEERRRVRDLESRLDECTHNQKDTQEVDALRSRISELENKLTDCIESGGGNLTEISRLQSRILDLERQLNDCRHNNKTNTETDRNETS.

The interval 342–380 (TNTGIEEPHATGGDKEDQPIKVVHPPNNDKDDAIKSYNP) is disordered. A compositionally biased stretch (basic and acidic residues) spans 347-360 (EEPHATGGDKEDQP). Coiled coils occupy residues 420–522 (NGGE…RDGK) and 548–692 (EIDK…NNKT).

It belongs to the poxviridae A25 protein family. Interacts (via N-terminus) with protein A26.

It is found in the virion. Functionally, structural protein that forms a matrix surrounding the mature virion (MV) through interaction with protein A26. Presence of protein A25 in the virion structurally prevents direct virus-cell fusion mechanism. The protein is A-type inclusion protein A25 homolog of Variola virus (isolate Human/India/Ind3/1967) (VARV).